Reading from the N-terminus, the 209-residue chain is rRNA N(6)-adenosine-methyltransferase METTL5 (209 aa).

Residues Q28, T31, G59, C62, V64, D81, and 108-109 (DV) contribute to the S-adenosyl-L-methionine site.

This sequence belongs to the methyltransferase superfamily. PrmA family. As to quaternary structure, heterodimer; heterodimerizes with TRMT112. As to expression, expressed from very early development (8 post-conceptual weeks) and expression persists through adulthood in multiple substructures of the brain, including the cerebellar cortex, hippocampus, and striatum.

Its subcellular location is the nucleus. It localises to the presynapse. The protein resides in the postsynapse. The enzyme catalyses adenosine(1832) in 18S rRNA + S-adenosyl-L-methionine = N(6)-methyladenosine(1832) in 18S rRNA + S-adenosyl-L-homocysteine + H(+). With respect to regulation, rRNA N6-adenosine-methyltransferase activity is inhibited by zinc. Its function is as follows. Catalytic subunit of a heterodimer with TRMT112, which specifically methylates the 6th position of adenine in position 1832 of 18S rRNA. N6-methylation of adenine(1832) in 18S rRNA resides in the decoding center of 18S rRNA and is required for translation and embryonic stem cells (ESCs) pluripotency and differentiation. The polypeptide is rRNA N(6)-adenosine-methyltransferase METTL5 (Homo sapiens (Human)).